We begin with the raw amino-acid sequence, 219 residues long: Cytidylate kinase (219 aa).

21–29 (GPAASGKGT) contacts ATP.

Belongs to the cytidylate kinase family. Type 1 subfamily.

Its subcellular location is the cytoplasm. The catalysed reaction is CMP + ATP = CDP + ADP. It carries out the reaction dCMP + ATP = dCDP + ADP. The protein is Cytidylate kinase of Rickettsia africae (strain ESF-5).